A 142-amino-acid chain; its full sequence is ATP synthase epsilon chain (142 aa).

Belongs to the ATPase epsilon chain family. As to quaternary structure, F-type ATPases have 2 components, CF(1) - the catalytic core - and CF(0) - the membrane proton channel. CF(1) has five subunits: alpha(3), beta(3), gamma(1), delta(1), epsilon(1). CF(0) has three main subunits: a, b and c.

The protein resides in the cell membrane. Functionally, produces ATP from ADP in the presence of a proton gradient across the membrane. In Lactiplantibacillus plantarum (strain ATCC BAA-793 / NCIMB 8826 / WCFS1) (Lactobacillus plantarum), this protein is ATP synthase epsilon chain.